Here is a 339-residue protein sequence, read N- to C-terminus: Ferrochelatase (339 aa).

His202 and Glu283 together coordinate Fe cation.

The protein belongs to the ferrochelatase family.

Its subcellular location is the cytoplasm. It carries out the reaction heme b + 2 H(+) = protoporphyrin IX + Fe(2+). The protein operates within porphyrin-containing compound metabolism; protoheme biosynthesis; protoheme from protoporphyrin-IX: step 1/1. Functionally, catalyzes the ferrous insertion into protoporphyrin IX. The sequence is that of Ferrochelatase from Psychrobacter sp. (strain PRwf-1).